The primary structure comprises 230 residues: Broad specificity amino-acid racemase YgeA (230 aa).

Substrate contacts are provided by residues Met10, Gln52, and 83–85 (TNT). Catalysis depends on Thr83, which acts as the Proton donor. Catalysis depends on Cys197, which acts as the Proton acceptor. Position 198-199 (198-199 (TE)) interacts with substrate.

It belongs to the aspartate/glutamate racemases family.

The catalysed reaction is an L-alpha-amino acid = a D-alpha-amino acid. It carries out the reaction L-homoserine = D-homoserine. In terms of biological role, amino-acid racemase able to utilize a broad range of substrates. Highest activity is observed with L-homoserine and D-homoserine. Has tenfold lower activity against L-methionine, L-leucine, L-valine and L-histidine. Has low activity with L-norvaline, L-asparagine, D-methionine, L-aminobutyric acid, L-isoleucine, L-serine, L-norleucine, L-alanine, L-glutamine, LL-diaminopimelic acid and L-phenylalanine. Has no activity against ten L-amino acids (Thr, Glu, Asp, Arg, Lys, Tyr, Trp, Orn, Cit and Aad). D-amino acids might be used as components of peptidoglycan and/or be involved in peptidoglycan metabolism and remodeling. This is Broad specificity amino-acid racemase YgeA (ygeA) from Escherichia coli (strain K12).